Here is a 1008-residue protein sequence, read N- to C-terminus: Retinoblastoma-related protein (1008 aa).

The interval 375–394 is disordered; the sequence is KRKVDSMTSPTKTITSPLSP. A compositionally biased stretch (polar residues) spans 380 to 392; that stretch reads SMTSPTKTITSPL. Residues 404-605 form a domain A region; sequence TPVSTAMTTA…EKGSSMYNSL (202 aa). A pocket region spans residues 404-853; sequence TPVSTAMTTA…NEVFIPSVKP (450 aa). Positions 606 to 722 are spacer; the sequence is TIARPNLSNE…HPTRGETCGE (117 aa). Positions 723 to 853 are domain B; sequence TAVNLFFSKI…NEVFIPSVKP (131 aa). Disordered regions lie at residues 865–899 and 988–1008; these read KNPN…SLPD and LQNG…LKTE.

Belongs to the retinoblastoma protein (RB) family.

It localises to the nucleus. Regulator of biological processes that recruits a histone deacetylase to control gene transcription. May play a role in the entry into mitosis, negatively regulating the cell proliferation. Formation of stable complexes with geminiviridae replication-associated proteins may create a cellular environment which favors viral DNA replication. This is Retinoblastoma-related protein (RBR) from Pilosella officinarum (Mouse-ear hawkweed).